A 203-amino-acid chain; its full sequence is Thymidylate kinase (203 aa).

Residue 14-21 coordinates ATP; the sequence is GGEGIGKS.

The protein belongs to the thymidylate kinase family.

It catalyses the reaction dTMP + ATP = dTDP + ADP. Phosphorylation of dTMP to form dTDP in both de novo and salvage pathways of dTTP synthesis. This is Thymidylate kinase from Rickettsia africae (strain ESF-5).